Reading from the N-terminus, the 271-residue chain is 2,3,4,5-tetrahydropyridine-2,6-dicarboxylate N-succinyltransferase (271 aa).

2 residues coordinate substrate: R102 and D139.

The protein belongs to the transferase hexapeptide repeat family. In terms of assembly, homotrimer.

The protein localises to the cytoplasm. The enzyme catalyses (S)-2,3,4,5-tetrahydrodipicolinate + succinyl-CoA + H2O = (S)-2-succinylamino-6-oxoheptanedioate + CoA. The protein operates within amino-acid biosynthesis; L-lysine biosynthesis via DAP pathway; LL-2,6-diaminopimelate from (S)-tetrahydrodipicolinate (succinylase route): step 1/3. The sequence is that of 2,3,4,5-tetrahydropyridine-2,6-dicarboxylate N-succinyltransferase from Coxiella burnetii (strain RSA 331 / Henzerling II).